The chain runs to 292 residues: NAD kinase (292 aa).

Residue D73 is the Proton acceptor of the active site. NAD(+) contacts are provided by residues 73-74 (DG), 147-148 (NE), H158, R175, D177, 188-193 (TAYSLS), and Q247.

Belongs to the NAD kinase family. The cofactor is a divalent metal cation.

Its subcellular location is the cytoplasm. It carries out the reaction NAD(+) + ATP = ADP + NADP(+) + H(+). Functionally, involved in the regulation of the intracellular balance of NAD and NADP, and is a key enzyme in the biosynthesis of NADP. Catalyzes specifically the phosphorylation on 2'-hydroxyl of the adenosine moiety of NAD to yield NADP. The sequence is that of NAD kinase from Salmonella agona (strain SL483).